The chain runs to 390 residues: Chorismate synthase (390 aa).

The NADP(+) site is built by R39 and R45. FMN contacts are provided by residues 132–134, 253–254, G298, 313–317, and R339; these read RSS, NA, and KPIPT.

It belongs to the chorismate synthase family. In terms of assembly, homotetramer. FMNH2 serves as cofactor.

It catalyses the reaction 5-O-(1-carboxyvinyl)-3-phosphoshikimate = chorismate + phosphate. It functions in the pathway metabolic intermediate biosynthesis; chorismate biosynthesis; chorismate from D-erythrose 4-phosphate and phosphoenolpyruvate: step 7/7. Functionally, catalyzes the anti-1,4-elimination of the C-3 phosphate and the C-6 proR hydrogen from 5-enolpyruvylshikimate-3-phosphate (EPSP) to yield chorismate, which is the branch point compound that serves as the starting substrate for the three terminal pathways of aromatic amino acid biosynthesis. This reaction introduces a second double bond into the aromatic ring system. This chain is Chorismate synthase, found in Bacillus subtilis (strain 168).